Consider the following 337-residue polypeptide: Dehydrogenase FUB6 (337 aa).

The protein belongs to the zinc-containing alcohol dehydrogenase family. Quinone oxidoreductase subfamily.

It participates in mycotoxin biosynthesis. Functionally, dehydrogenase; part of the gene cluster that mediates the biosynthesis of fusaric acid, a mycotoxin with low to moderate toxicity to animals and humans, but with high phytotoxic properties. L-aspartate is suggested as fusaric acid amino acid precursor that is activated and further processed to O-acetyl-L-homoserine by cluster enzymes aspartate kinase FUB3 and homoserine O-acetyltransferase FUB5, as well as enzymes of the primary metabolism. The polyketide synthase (PKS) FUB1 generates the triketide trans-2-hexenal which is presumptively released by the hydrolase FUB4 and linked to the NRPS-bound amino acid precursor by NAD(P)-dependent dehydrogenase FUB6. FUB1, FUB4, and the non-canonical NRPS Fub8 may form an enzyme complex. Further processing of the NRPS-bound intermediate might be carried out by FUB6 and the O-acetylhomoserine FUB7, enabling a spontaneous electrocyclization to close the carbon backbone of fusaric acid. Dihydrofusaric acid is likely to be released via reduction by the thioester reductase (TR) domain of FUB8 whereupon the final oxidation to fusaric acid may (also) be performed by the FMN-dependent dehydrogenase FUB9. The chain is Dehydrogenase FUB6 from Gibberella fujikuroi (strain CBS 195.34 / IMI 58289 / NRRL A-6831) (Bakanae and foot rot disease fungus).